The following is a 574-amino-acid chain: Proline--tRNA ligase (574 aa).

Belongs to the class-II aminoacyl-tRNA synthetase family. ProS type 1 subfamily. Homodimer.

It is found in the cytoplasm. The enzyme catalyses tRNA(Pro) + L-proline + ATP = L-prolyl-tRNA(Pro) + AMP + diphosphate. In terms of biological role, catalyzes the attachment of proline to tRNA(Pro) in a two-step reaction: proline is first activated by ATP to form Pro-AMP and then transferred to the acceptor end of tRNA(Pro). As ProRS can inadvertently accommodate and process non-cognate amino acids such as alanine and cysteine, to avoid such errors it has two additional distinct editing activities against alanine. One activity is designated as 'pretransfer' editing and involves the tRNA(Pro)-independent hydrolysis of activated Ala-AMP. The other activity is designated 'posttransfer' editing and involves deacylation of mischarged Ala-tRNA(Pro). The misacylated Cys-tRNA(Pro) is not edited by ProRS. This chain is Proline--tRNA ligase, found in Sodalis glossinidius (strain morsitans).